Here is a 673-residue protein sequence, read N- to C-terminus: Inactive polyglycylase TTLL10 (673 aa).

The tract at residues 1–132 is disordered; the sequence is MDHSCTRFIH…ADSDDTNAAG (132 aa). A compositionally biased stretch (basic residues) spans 8–36; it reads FIHRRGPPTRTRAGFKRGKRPRIQQRPRA. The segment covering 52–62 has biased composition (pro residues); it reads ASQPGPCPAPG. Basic and acidic residues predominate over residues 89–105; that stretch reads PDHDADGHCGPDLEGAE. The 398-residue stretch at 155–552 folds into the TTL domain; it reads PGPFFYIGGS…TFRKSLRGQK (398 aa). Residues 362-365, Lys375, and Asp377 each bind ATP; that span reads QRYI. The segment at 569 to 673 is disordered; it reads EADPRPHLGG…EREEPENARP (105 aa). A compositionally biased stretch (pro residues) spans 612–627; the sequence is PAPPPLVPQRPRPPGP. Residues 661-673 are compositionally biased toward basic and acidic residues; the sequence is AKEEREEPENARP.

Functionally, inactive polyglycylase. This Homo sapiens (Human) protein is Inactive polyglycylase TTLL10.